The following is a 281-amino-acid chain: Pantothenate synthetase (281 aa).

26–33 is an ATP binding site; that stretch reads MGNLHDGH. The active-site Proton donor is the His33. Gln57 serves as a coordination point for (R)-pantoate. Residue Gln57 participates in beta-alanine binding. Residue 145–148 coordinates ATP; sequence GEKD. Gln151 lines the (R)-pantoate pocket. An ATP-binding site is contributed by 182-185; it reads MSSR.

Belongs to the pantothenate synthetase family. In terms of assembly, homodimer.

It localises to the cytoplasm. The enzyme catalyses (R)-pantoate + beta-alanine + ATP = (R)-pantothenate + AMP + diphosphate + H(+). It functions in the pathway cofactor biosynthesis; (R)-pantothenate biosynthesis; (R)-pantothenate from (R)-pantoate and beta-alanine: step 1/1. Functionally, catalyzes the condensation of pantoate with beta-alanine in an ATP-dependent reaction via a pantoyl-adenylate intermediate. The sequence is that of Pantothenate synthetase from Idiomarina loihiensis (strain ATCC BAA-735 / DSM 15497 / L2-TR).